A 49-amino-acid chain; its full sequence is Large ribosomal subunit protein bL33B (49 aa).

This sequence belongs to the bacterial ribosomal protein bL33 family.

The polypeptide is Large ribosomal subunit protein bL33B (Staphylococcus saprophyticus subsp. saprophyticus (strain ATCC 15305 / DSM 20229 / NCIMB 8711 / NCTC 7292 / S-41)).